A 58-amino-acid polypeptide reads, in one-letter code: UPF0509 protein YciZ (58 aa).

This sequence belongs to the UPF0509 family.

The sequence is that of UPF0509 protein YciZ from Escherichia fergusonii (strain ATCC 35469 / DSM 13698 / CCUG 18766 / IAM 14443 / JCM 21226 / LMG 7866 / NBRC 102419 / NCTC 12128 / CDC 0568-73).